The following is a 475-amino-acid chain: Ankyrin repeat, SAM and basic leucine zipper domain-containing protein 1 (475 aa).

Residues 1–24 (MAAGPLRGLAVAGGGESSESEDDG) form a disordered region. Phosphoserine occurs at positions 17, 18, and 20. ANK repeat units follow at residues 45–74 (ERQETFKKALTSGNISLVEELLDSGISVDT), 78–107 (YGWTSLMYAASVSNVELVRVLLDRGANASF), 110–144 (DKQTVLITACSARGSEEKILKCIELLLSRNADPNV), 148–177 (RLMTPIMYAARDGHPQVVALLVAHGAEVNT), 181–210 (NGYTALTWAARQGHKNVVLKLLELGANKMI), and 214–243 (DGKTPSEIAKRNKHLEIFNFLSLTLNPLEG). Residues 272-334 (SYTAFGDLEI…KIMAALKELE (63 aa)) form the SAM domain.

Interacts with DDX4, PIWIL1, RANBP9 and TDRD1.

The protein resides in the cytoplasm. In terms of biological role, plays a central role during spermatogenesis by repressing transposable elements and preventing their mobilization, which is essential for the germline integrity. Acts via the piRNA metabolic process, which mediates the repression of transposable elements during meiosis by forming complexes composed of piRNAs and Piwi proteins and governs the methylation and subsequent repression of transposons. Its association with pi-bodies suggests a participation in the primary piRNAs metabolic process. Required prior to the pachytene stage to facilitate the production of multiple types of piRNAs, including those associated with repeats involved in the regulation of retrotransposons. May act by mediating protein-protein interactions during germ cell maturation. In Ovis aries (Sheep), this protein is Ankyrin repeat, SAM and basic leucine zipper domain-containing protein 1 (ASZ1).